A 574-amino-acid polypeptide reads, in one-letter code: PI-PLC X domain-containing protein DDB_G0269228 (574 aa).

Residues 1-42 (MFSSIMFKKKPKQNLNENEITSQSTTTTSTLSDSKPSEKKIK) form a disordered region. A compositionally biased stretch (low complexity) spans 21-34 (TSQSTTTTSTLSDS). Residues 270–449 (GIKSSSLRVP…LKKRIINDDG (180 aa)) form the PI-PLC X-box domain.

The protein is PI-PLC X domain-containing protein DDB_G0269228 of Dictyostelium discoideum (Social amoeba).